The sequence spans 693 residues: Elongation factor G (693 aa).

The 275-residue stretch at 8–282 (KNTRNIGIMA…AAIEYLPSPL (275 aa)) folds into the tr-type G domain. GTP contacts are provided by residues 17-24 (AHIDAGKT), 81-85 (DTPGH), and 135-138 (NKMD).

It belongs to the TRAFAC class translation factor GTPase superfamily. Classic translation factor GTPase family. EF-G/EF-2 subfamily.

The protein resides in the cytoplasm. Functionally, catalyzes the GTP-dependent ribosomal translocation step during translation elongation. During this step, the ribosome changes from the pre-translocational (PRE) to the post-translocational (POST) state as the newly formed A-site-bound peptidyl-tRNA and P-site-bound deacylated tRNA move to the P and E sites, respectively. Catalyzes the coordinated movement of the two tRNA molecules, the mRNA and conformational changes in the ribosome. This chain is Elongation factor G, found in Macrococcus caseolyticus (strain JCSC5402) (Macrococcoides caseolyticum).